We begin with the raw amino-acid sequence, 563 residues long: GTPase Obg (563 aa).

Residues 2-168 (SDFVDRVTVH…RDVILELKSI (167 aa)) enclose the Obg domain. Residues 169–349 (ADVALVGFPS…LNFALSALVH (181 aa)) enclose the OBG-type G domain. Residues 175 to 182 (GFPSAGKS), 200 to 204 (FTTLV), 221 to 224 (DVPG), 301 to 304 (NKID), and 330 to 332 (STA) each bind GTP. The Mg(2+) site is built by Ser-182 and Thr-202. Residues 383 to 469 (DEGGSALEFT…ARMVEFDWDP (87 aa)) enclose the OCT domain. The disordered stretch occupies residues 529 to 563 (RKAGHWADPTVDDDRHDETSLFGHGESSEDGETEE).

It belongs to the TRAFAC class OBG-HflX-like GTPase superfamily. OBG GTPase family. Monomer. Mg(2+) serves as cofactor.

The protein localises to the cytoplasm. In terms of biological role, an essential GTPase which binds GTP, GDP and possibly (p)ppGpp with moderate affinity, with high nucleotide exchange rates and a fairly low GTP hydrolysis rate. Plays a role in control of the cell cycle, stress response, ribosome biogenesis and in those bacteria that undergo differentiation, in morphogenesis control. The sequence is that of GTPase Obg from Bifidobacterium longum (strain DJO10A).